We begin with the raw amino-acid sequence, 307 residues long: Ubiquinol oxidase subunit 2 (307 aa).

The first 23 residues, 1-23 (MKNKLLARVARLGGLSSALLLAG), serve as a signal peptide directing secretion. A lipid anchor (N-palmitoyl cysteine) is attached at C24. C24 carries S-diacylglycerol cysteine lipidation. 2 helical membrane-spanning segments follow: residues 46–66 (STVA…LFAW) and 87–107 (IEVT…VITY).

This sequence belongs to the cytochrome c oxidase subunit 2 family. As to quaternary structure, heterotetramer of the subunits 1, 2, 3 and 4.

It is found in the cell membrane. In Acetobacter aceti, this protein is Ubiquinol oxidase subunit 2 (cyaB).